Consider the following 510-residue polypeptide: NAD(P)H-quinone oxidoreductase subunit 2 B, chloroplastic (510 aa).

A run of 13 helical transmembrane segments spans residues 24–44 (LLLFDGSFIFPECILIFGLIL), 57–77 (IPWFYFISSTSLVMSITALLF), 99–119 (IFQFLILLCSTLCIPLSVEYI), 124–144 (MAITEFLLFVLTATLGGMFLC), 149–169 (LITIFVAPECFSLCSYLLSGY), 183–203 (YLLMGGASSSILVHGFSWLYG), 227–247 (PGILIALLFITVGIGFKLSLA), 295–315 (WHLLLEILAILSMILGNLIAI), 323–343 (MLAYSSIGQIGYVIIGIIVGD), 354–374 (YMLFYISMNLGTFACIVLFGL), 395–415 (ALSLALCLLSLGGLPPLAGFF), 428–448 (GLYFLVSIGLLTSVISIYYYL), and 484–504 (MIVCVIASTIPGISMNPIIAI).

Belongs to the complex I subunit 2 family. NDH is composed of at least 16 different subunits, 5 of which are encoded in the nucleus.

It localises to the plastid. The protein resides in the chloroplast thylakoid membrane. The enzyme catalyses a plastoquinone + NADH + (n+1) H(+)(in) = a plastoquinol + NAD(+) + n H(+)(out). The catalysed reaction is a plastoquinone + NADPH + (n+1) H(+)(in) = a plastoquinol + NADP(+) + n H(+)(out). NDH shuttles electrons from NAD(P)H:plastoquinone, via FMN and iron-sulfur (Fe-S) centers, to quinones in the photosynthetic chain and possibly in a chloroplast respiratory chain. The immediate electron acceptor for the enzyme in this species is believed to be plastoquinone. Couples the redox reaction to proton translocation, and thus conserves the redox energy in a proton gradient. The polypeptide is NAD(P)H-quinone oxidoreductase subunit 2 B, chloroplastic (Eucalyptus globulus subsp. globulus (Tasmanian blue gum)).